The following is a 122-amino-acid chain: Acidic phospholipase A2 1 (122 aa).

Cystine bridges form between Cys26–Cys115, Cys28–Cys44, Cys43–Cys94, Cys49–Cys122, Cys50–Cys87, Cys57–Cys81, and Cys75–Cys85. 3 residues coordinate Ca(2+): Tyr27, Gly29, and Gly31. Residue His47 is part of the active site. Asp48 is a binding site for Ca(2+). Residue Asp88 is part of the active site.

The protein belongs to the phospholipase A2 family. Group II subfamily. D49 sub-subfamily. Homodimer. Ca(2+) serves as cofactor. Expressed by the venom gland.

It localises to the secreted. It carries out the reaction a 1,2-diacyl-sn-glycero-3-phosphocholine + H2O = a 1-acyl-sn-glycero-3-phosphocholine + a fatty acid + H(+). Functionally, PLA2 catalyzes the calcium-dependent hydrolysis of the 2-acyl groups in 3-sn-phosphoglycerides. The chain is Acidic phospholipase A2 1 from Protobothrops mucrosquamatus (Taiwan habu).